A 173-amino-acid polypeptide reads, in one-letter code: Calcium-binding protein 5 (173 aa).

4 consecutive EF-hand domains span residues 28–63 (DEIEELREAFLEFDKDRDGFISCKDLGNLMRTMGYM), 82–99 (GRVDFDDFVELMTPKLLA), 105–140 (IGVQEMRDAFKEFDANGDGEITLGELQQAMQRLLGD), and 142–173 (LTSQEISEVVQEADINGDGTVDFEEFVKMMSR). Residues aspartate 41, aspartate 43, aspartate 45, and aspartate 52 each coordinate Ca(2+). Residues aspartate 118, asparagine 120, aspartate 122, glutamate 124, glutamate 129, aspartate 155, asparagine 157, aspartate 159, threonine 161, and glutamate 166 each contribute to the Ca(2+) site.

Interacts with CACNA1C (via C-terminal CDB motif) in a calcium-dependent manner. Interacts with STXBP1. Interacts with MYO6. As to expression, expressed in the retina (at protein level).

The protein resides in the cytoplasm. Functionally, inhibits calcium-dependent inactivation of L-type calcium channel and shifts voltage dependence of activation to more depolarized membrane potentials. Involved in the transmission of light signals. May positively regulate neurotransmitter vesicle endocytosis and exocytosis in a salt-dependent manner. May play a role in the extension and network organization of neurites. The chain is Calcium-binding protein 5 (CABP5) from Bos taurus (Bovine).